Reading from the N-terminus, the 203-residue chain is Large ribosomal subunit protein uL3 (203 aa).

Belongs to the universal ribosomal protein uL3 family. As to quaternary structure, part of the 50S ribosomal subunit. Forms a cluster with proteins L14 and L19.

Its function is as follows. One of the primary rRNA binding proteins, it binds directly near the 3'-end of the 23S rRNA, where it nucleates assembly of the 50S subunit. The chain is Large ribosomal subunit protein uL3 from Christiangramia forsetii (strain DSM 17595 / CGMCC 1.15422 / KT0803) (Gramella forsetii).